The primary structure comprises 224 residues: Thiamine-triphosphatase (224 aa).

The residue at position 2 (Ala-2) is an N-acetylalanine. Residues 5–201 enclose the CYTH domain; it reads LIEVERKFTP…AKLLVYLQRF (197 aa). Mg(2+) contacts are provided by Glu-7 and Glu-9. Residues Lys-11, Arg-55, Arg-57, Lys-65, and Arg-125 each coordinate substrate. Mg(2+)-binding residues include Asp-145, Glu-157, and Glu-159. Glu-157 provides a ligand contact to substrate. Lys-193 serves as a coordination point for substrate.

This sequence belongs to the ThTPase family. Monomer. Requires Mg(2+) as cofactor.

The protein localises to the cytoplasm. It catalyses the reaction thiamine triphosphate + H2O = thiamine diphosphate + phosphate + H(+). Functionally, hydrolase highly specific for thiamine triphosphate (ThTP). This chain is Thiamine-triphosphatase (Thtpa), found in Rattus norvegicus (Rat).